The following is a 143-amino-acid chain: Snake venom vascular endothelial growth factor toxin (143 aa).

An N-terminal signal peptide occupies residues 1–24; the sequence is MAVYLLAVAILFCIQGWPSGTVQG. E25 is subject to Pyrrolidone carboxylic acid (Glu). Intrachain disulfides connect C38/C80, C69/C115, and C73/C117. The interval 117-143 is disordered; the sequence is CRPRSPGDVNDGRNPKEGEPRARFPFV.

The protein belongs to the PDGF/VEGF growth factor family. Snake venom VEGF subfamily. As to quaternary structure, homodimer; disulfide-linked. Interacts with VEGF receptor-1 (FLT1) with a high affinity, whereas it binds to VEGF receptor-2 (KDR) with a low affinity. Does not bind to VEGFR-3/FLT4 and neuropilin-1 (NRP1). In terms of tissue distribution, expressed by the venom gland.

The protein localises to the secreted. Functionally, snake venom VEGFs may contribute to venom dispersion and prey subjugation by inducing vascular permeability and hypotension. This protein activates the vascular endothelial growth factor receptor-1 (VEGFR-1/FLT1), and consequently promotes the proliferation and tissue factor production of endothelial cells, the neovascularization in the chicken chorioallantoic membrane, and increases vascular permeability. Also stimulates tissue-factor production and human monocyte chemotaxis. This chain is Snake venom vascular endothelial growth factor toxin, found in Protobothrops mucrosquamatus (Taiwan habu).